The following is a 271-amino-acid chain: MSDDRYCVFGNPVAHSRSPRIHALFAEQCGQAMTYEAIEAPREDFAGAWHAFVAAGGCGANVTVPFKEDAFRLADVLSQRARRAGAVNTLVRGRDGRTYADTTDGVGLVRDLEAHGVTLEGARILILGAGGAVRGVLDPLLAKAPSCLHIANRTASKAVRLAEEASPEGRVTGGGYSELDGAFDVVINGTSASLGGELPPLPDTLLAADGVAYDMMYAAEPTVFLQWAAAHGGRGIDGLGMLIEQAAESFFLWRQVRPDTAPVRETLRREL.

Residues 16-18 and Thr-63 each bind shikimate; that span reads SRS. Lys-67 functions as the Proton acceptor in the catalytic mechanism. Shikimate contacts are provided by Asn-88 and Asp-104. NADP(+) contacts are provided by residues 128–132, 152–157, and Met-215; these read GAGGA and NRTASK. Shikimate is bound at residue Tyr-217. Gly-238 provides a ligand contact to NADP(+).

The protein belongs to the shikimate dehydrogenase family. As to quaternary structure, homodimer.

The catalysed reaction is shikimate + NADP(+) = 3-dehydroshikimate + NADPH + H(+). It participates in metabolic intermediate biosynthesis; chorismate biosynthesis; chorismate from D-erythrose 4-phosphate and phosphoenolpyruvate: step 4/7. Functionally, involved in the biosynthesis of the chorismate, which leads to the biosynthesis of aromatic amino acids. Catalyzes the reversible NADPH linked reduction of 3-dehydroshikimate (DHSA) to yield shikimate (SA). In Chromohalobacter salexigens (strain ATCC BAA-138 / DSM 3043 / CIP 106854 / NCIMB 13768 / 1H11), this protein is Shikimate dehydrogenase (NADP(+)).